A 160-amino-acid chain; its full sequence is CXXC motif containing zinc binding protein (160 aa).

Zn(2+)-binding residues include cysteine 33, cysteine 36, cysteine 67, and cysteine 70. Serine 75 is subject to Phosphoserine.

The protein belongs to the UPF0587 family. As to quaternary structure, monomer.

This Rattus norvegicus (Rat) protein is CXXC motif containing zinc binding protein.